A 176-amino-acid chain; its full sequence is Translation initiation factor IF-3 (176 aa).

The protein belongs to the IF-3 family. As to quaternary structure, monomer.

The protein localises to the cytoplasm. Its function is as follows. IF-3 binds to the 30S ribosomal subunit and shifts the equilibrium between 70S ribosomes and their 50S and 30S subunits in favor of the free subunits, thus enhancing the availability of 30S subunits on which protein synthesis initiation begins. This Microcystis aeruginosa (strain NIES-843 / IAM M-2473) protein is Translation initiation factor IF-3.